Here is a 676-residue protein sequence, read N- to C-terminus: ATP-dependent RNA helicase dbp-9 (676 aa).

A disordered region spans residues 1-97 (MAKRKLNETD…SEKDDADLTF (97 aa)). Residues 70–90 (QQLKDEQKQQDEKDEKKQSEK) are compositionally biased toward basic and acidic residues. Residues 95 to 123 (LTFSDLGLDPRLVQAVAKQSFEKPTLVQR) carry the Q motif motif. The Helicase ATP-binding domain occupies 126–304 (IPLALAGQDV…KGFFCRNPTM (179 aa)). ATP is bound at residue 139 to 146 (AKTGSGKT). The DEAD box motif lies at 251-254 (DEAD). The region spanning 317-541 (KLTQFYVKCG…PYNFNKDQME (225 aa)) is the Helicase C-terminal domain. Basic and acidic residues predominate over residues 410-432 (EDEKTEEKKEEQGEKKEGDEKKN). Disordered regions lie at residues 410-444 (EDEK…RRDQ) and 633-676 (FKKQ…RVRK). Basic residues predominate over residues 642-663 (TRGKKGAKGGKGGHGKYKKGPG).

The protein belongs to the DEAD box helicase family. DDX56/DBP9 subfamily.

Its subcellular location is the nucleus. It localises to the nucleolus. It carries out the reaction ATP + H2O = ADP + phosphate + H(+). ATP-binding RNA helicase involved in the biogenesis of 60S ribosomal subunits and is required for the normal formation of 25S and 5.8S rRNAs. This Neurospora crassa (strain ATCC 24698 / 74-OR23-1A / CBS 708.71 / DSM 1257 / FGSC 987) protein is ATP-dependent RNA helicase dbp-9 (dbp-9).